A 377-amino-acid chain; its full sequence is MEVAIPKDLQQEASLAKKRYMDLCRQGQIFDARNRIIGGDTQAWDVQVRNQKIKEVTEKARDETFAAEMRHNDKVMCIMHDRELRHRKQLCRAINDFQQRFQKPETRREFDLSDPLALKKELPARVSDNDMRNTISGMQKFMGEDLNFQERKRIQKEQNREWSLQQHGEWERAQAEHKLAEHLHTQTELKFDEAARDLQRLEITTRKAVCAAVKEFNKKQVVELAERKRQVKQQEQEDNMSEITNLLHGDLLSENPQQAASNFGPRHVMLDRWKGMNREQLEEIWSTWKQQIHEKLRLQEEERQHNMDWDLRRTRKAHASLLQERQQQRLLREQRRALDCSNLSLAKQQYLQKRQLDAAPSSQPTEDYFSQFNTRSR.

Residues Glu188 to Asp238 adopt a coiled-coil conformation. A disordered region spans residues Gln355 to Arg377. A compositionally biased stretch (polar residues) spans Pro360–Arg377.

Belongs to the RIB43A family. As to quaternary structure, microtubule inner protein component of sperm flagellar doublet microtubules.

It is found in the cytoplasm. The protein localises to the cytoskeleton. The protein resides in the cilium axoneme. It localises to the flagellum axoneme. In terms of biological role, microtubule inner protein (MIP) part of the dynein-decorated doublet microtubules (DMTs) in cilia axoneme, which is required for motile cilia beating. The sequence is that of RIB43A-like with coiled-coils protein 2 from Rattus norvegicus (Rat).